Here is a 378-residue protein sequence, read N- to C-terminus: Cytochrome b (378 aa).

4 consecutive transmembrane segments (helical) span residues 34-54, 78-99, 114-134, and 179-199; these read FGSL…FLAM, WFLR…FIHV, WNTG…GYVL, and FFTF…IHLL. Residues H84 and H98 each coordinate heme b. Residues H183 and H197 each coordinate heme b. H202 contacts a ubiquinone. 4 consecutive transmembrane segments (helical) span residues 227–247, 289–309, 321–341, and 348–368; these read YKDI…IWKF, LGGV…PFTH, LNQI…WIGA, and YILT…INPL.

Belongs to the cytochrome b family. In terms of assembly, the main subunits of complex b-c1 are: cytochrome b, cytochrome c1 and the Rieske protein. The cofactor is heme b.

The protein resides in the mitochondrion inner membrane. In terms of biological role, component of the ubiquinol-cytochrome c reductase complex (complex III or cytochrome b-c1 complex) that is part of the mitochondrial respiratory chain. The b-c1 complex mediates electron transfer from ubiquinol to cytochrome c. Contributes to the generation of a proton gradient across the mitochondrial membrane that is then used for ATP synthesis. This chain is Cytochrome b (mt:Cyt-b), found in Anopheles gambiae (African malaria mosquito).